The primary structure comprises 411 residues: Putative competence-damage inducible protein (411 aa).

It belongs to the CinA family.

This chain is Putative competence-damage inducible protein, found in Caldicellulosiruptor bescii (strain ATCC BAA-1888 / DSM 6725 / KCTC 15123 / Z-1320) (Anaerocellum thermophilum).